We begin with the raw amino-acid sequence, 203 residues long: Imidazoleglycerol-phosphate dehydratase (203 aa).

It belongs to the imidazoleglycerol-phosphate dehydratase family.

The protein localises to the cytoplasm. It catalyses the reaction D-erythro-1-(imidazol-4-yl)glycerol 3-phosphate = 3-(imidazol-4-yl)-2-oxopropyl phosphate + H2O. The protein operates within amino-acid biosynthesis; L-histidine biosynthesis; L-histidine from 5-phospho-alpha-D-ribose 1-diphosphate: step 6/9. This chain is Imidazoleglycerol-phosphate dehydratase, found in Synechococcus sp. (strain RCC307).